A 228-amino-acid chain; its full sequence is Prophenin-2 (228 aa).

The N-terminal stretch at 1 to 29 (METQRASLCLGRWSLWLLLLALVVPSASA) is a signal peptide. Positions 30 to 146 (QALSYREAVL…FLRRPRLRRQ (117 aa)) are excised as a propeptide. Disulfide bonds link cysteine 85–cysteine 96 and cysteine 107–cysteine 124. 7 tandem repeats follow at residues 148–157 (FPPPNVPGPR), 158–167 (FPPPNVPGPR), 168–177 (FPPPNFPGPR), 178–187 (FPPPNFPGPR), 188–197 (FPPPNFPGPP), 198–207 (FPPPIFPGPW), and 208–217 (FPPPPPFRPP). Residues 148–217 (FPPPNVPGPR…FPPPPPFRPP (70 aa)) form a 7 X 10 AA tandem repeats region. Disordered stretches follow at residues 167-195 (RFPP…NFPG) and 207-228 (WFPP…PGRR). At proline 225 the chain carries Proline amide. Positions 226–228 (GRR) are cleaved as a propeptide — removed in mature form.

This sequence belongs to the cathelicidin family.

It localises to the secreted. Functionally, exerts antimicrobial activity. It is more effective against Gram-negative bacteria than Gram-positive bacteria. The polypeptide is Prophenin-2 (Sus scrofa (Pig)).